Reading from the N-terminus, the 142-residue chain is Baculoviral IAP repeat-containing protein 5 (142 aa).

One copy of the BIR repeat lies at 18-88 (RVSTFKNWPF…KHSSGCAFLS (71 aa)). Ser20 carries the phosphoserine; by AURKC modification. Lys23 is modified (N6-acetyllysine). Thr34 carries the post-translational modification Phosphothreonine; by CDK1 and CDK15. Phosphothreonine is present on Thr48. Cys57, Cys60, His77, and Cys84 together coordinate Zn(2+). An N6-acetyllysine mark is found at Lys90, Lys110, Lys112, and Lys115. Thr117 carries the phosphothreonine; by AURKB modification. Residue Lys129 is modified to N6-acetyllysine.

It belongs to the IAP family. As to quaternary structure, monomer or homodimer. Exists as a homodimer in the apo state and as a monomer in the CPC-bound state. The monomer protects cells against apoptosis more efficiently than the dimer. Only the dimeric form is capable of enhancing tubulin stability in cells. When phosphorylated, interacts with LAMTOR5/HBXIP; the resulting complex binds pro-CASP9, as well as active CASP9, but much less efficiently. Component of the chromosomal passenger complex (CPC) composed of at least BIRC5/survivin, CDCA8/borealin, INCENP, AURKB or AURKC; in the complex forms a triple-helix bundle-based subcomplex with INCENP and CDCA8. Interacts with JTB. Interacts (via BIR domain) with histone H3 phosphorylated at 'Thr-3' (H3pT3). Interacts with EVI5. Interacts with GTP-bound RAN in both the S and M phases of the cell cycle. Interacts with USP9X. Interacts with tubulin. Interacts with BIRC2/c-IAP1. The acetylated form at Lys-129 interacts with STAT3. The monomeric form deacetylated at Lys-129 interacts with XPO1/CRM1. The monomeric form interacts with XIAP/BIRC4. Both the dimeric and monomeric form can interact with DIABLO/SMAC. Interacts with BIRC6/bruce. Interacts with FBXL7; this interaction facilitates the polyubiquitination and subsequent proteasomal degradation of BIRC5 by the SCF(FBXL7) E3 ubiquitin-protein ligase complex. In terms of processing, ubiquitinated by the Cul9-RING ubiquitin-protein ligase complex, leading to its degradation. Ubiquitination is required for centrosomal targeting. Deubiquitinated by USP35 or USP38; leading to stabilization. Post-translationally, acetylation at Lys-129 results in its homodimerization, while deacetylation promotes the formation of monomers which heterodimerize with XPO1/CRM1 which facilitates its nuclear export. The acetylated form represses STAT3 transactivation. The dynamic equilibrium between its acetylation and deacetylation at Lys-129 determines its interaction with XPO1/CRM1, its subsequent subcellular localization, and its ability to inhibit STAT3 transactivation. In vitro phosphorylation at Thr-117 by AURKB prevents interaction with INCENP and localization to mitotic chromosomes. Phosphorylation at Thr-48 by CK2 is critical for its mitotic and anti-apoptotic activities. Phosphorylation at Thr-34 by CDK15 is critical for its anti-apoptotic activity. Phosphorylation at Ser-20 by AURKC is critical for regulation of proper chromosome alignment and segregation, and possibly cytokinesis.

The protein localises to the cytoplasm. It localises to the nucleus. Its subcellular location is the chromosome. It is found in the centromere. The protein resides in the cytoskeleton. The protein localises to the spindle. It localises to the kinetochore. Its subcellular location is the midbody. Functionally, multitasking protein that has dual roles in promoting cell proliferation and preventing apoptosis. Component of a chromosome passage protein complex (CPC) which is essential for chromosome alignment and segregation during mitosis and cytokinesis. Acts as an important regulator of the localization of this complex; directs CPC movement to different locations from the inner centromere during prometaphase to midbody during cytokinesis and participates in the organization of the center spindle by associating with polymerized microtubules. Involved in the recruitment of CPC to centromeres during early mitosis via association with histone H3 phosphorylated at 'Thr-3' (H3pT3) during mitosis. The complex with RAN plays a role in mitotic spindle formation by serving as a physical scaffold to help deliver the RAN effector molecule TPX2 to microtubules. May counteract a default induction of apoptosis in G2/M phase. The acetylated form represses STAT3 transactivation of target gene promoters. May play a role in neoplasia. Inhibitor of CASP3 and CASP7. Essential for the maintenance of mitochondrial integrity and function. This is Baculoviral IAP repeat-containing protein 5 (BIRC5) from Bos taurus (Bovine).